We begin with the raw amino-acid sequence, 390 residues long: tRNA(Met) cytidine acetate ligase (390 aa).

Residues Val7–His20, Gly101, Asn162, and Arg187 each bind ATP.

It belongs to the TmcAL family.

The protein resides in the cytoplasm. It carries out the reaction cytidine(34) in elongator tRNA(Met) + acetate + ATP = N(4)-acetylcytidine(34) in elongator tRNA(Met) + AMP + diphosphate. Its function is as follows. Catalyzes the formation of N(4)-acetylcytidine (ac(4)C) at the wobble position of elongator tRNA(Met), using acetate and ATP as substrates. First activates an acetate ion to form acetyladenylate (Ac-AMP) and then transfers the acetyl group to tRNA to form ac(4)C34. The protein is tRNA(Met) cytidine acetate ligase of Listeria monocytogenes serotype 4a (strain HCC23).